The primary structure comprises 227 residues: Adenosylcobinamide-GDP ribazoletransferase (227 aa).

Helical transmembrane passes span 3 to 23 (CLKAVVAFFTALPVGGAELDF), 26 to 46 (IWATPYLAGLMVGGAGGAVYF), 95 to 115 (GVGGIFAVVALFVLAASARPE), 117 to 137 (WLDYIVTDLYSKALALVVAAY), and 165 to 185 (AVAAWLHPAAFLAATVLSLFF).

Belongs to the CobS family. Requires Mg(2+) as cofactor.

The protein resides in the cell membrane. The enzyme catalyses alpha-ribazole + adenosylcob(III)inamide-GDP = adenosylcob(III)alamin + GMP + H(+). It catalyses the reaction alpha-ribazole 5'-phosphate + adenosylcob(III)inamide-GDP = adenosylcob(III)alamin 5'-phosphate + GMP + H(+). Its pathway is cofactor biosynthesis; adenosylcobalamin biosynthesis; adenosylcobalamin from cob(II)yrinate a,c-diamide: step 7/7. In terms of biological role, joins adenosylcobinamide-GDP and alpha-ribazole to generate adenosylcobalamin (Ado-cobalamin). Also synthesizes adenosylcobalamin 5'-phosphate from adenosylcobinamide-GDP and alpha-ribazole 5'-phosphate. The sequence is that of Adenosylcobinamide-GDP ribazoletransferase from Pyrobaculum islandicum (strain DSM 4184 / JCM 9189 / GEO3).